A 199-amino-acid polypeptide reads, in one-letter code: Isopentenyl-diphosphate Delta-isomerase (199 aa).

Positions 40 and 47 each coordinate Mn(2+). A Nudix hydrolase domain is found at 45-186; sequence PRHLAFSCHV…PALLSPWAVE (142 aa). Cysteine 82 is a catalytic residue. Cysteine 82 is a binding site for Mg(2+). Residue histidine 84 coordinates Mn(2+). A Mg(2+)-binding site is contributed by glutamate 102. 2 residues coordinate Mn(2+): glutamate 131 and glutamate 133. The active site involves glutamate 133.

The protein belongs to the IPP isomerase type 1 family. It depends on Mg(2+) as a cofactor. The cofactor is Mn(2+).

The protein localises to the cytoplasm. It carries out the reaction isopentenyl diphosphate = dimethylallyl diphosphate. It functions in the pathway isoprenoid biosynthesis; dimethylallyl diphosphate biosynthesis; dimethylallyl diphosphate from isopentenyl diphosphate: step 1/1. In terms of biological role, catalyzes the 1,3-allylic rearrangement of the homoallylic substrate isopentenyl (IPP) to its highly electrophilic allylic isomer, dimethylallyl diphosphate (DMAPP). This chain is Isopentenyl-diphosphate Delta-isomerase, found in Cutibacterium acnes (strain DSM 16379 / KPA171202) (Propionibacterium acnes).